Here is a 505-residue protein sequence, read N- to C-terminus: Deoxyguanosinetriphosphate triphosphohydrolase (505 aa).

Residues 66–273 (RLTHSMEVQQ…MEAADDISYC (208 aa)) form the HD domain.

The protein belongs to the dGTPase family. Type 1 subfamily. Homotetramer. Mg(2+) is required as a cofactor.

It carries out the reaction dGTP + H2O = 2'-deoxyguanosine + triphosphate + H(+). Functionally, dGTPase preferentially hydrolyzes dGTP over the other canonical NTPs. This chain is Deoxyguanosinetriphosphate triphosphohydrolase, found in Escherichia coli O127:H6 (strain E2348/69 / EPEC).